Here is a 130-residue protein sequence, read N- to C-terminus: Small ribosomal subunit protein uS9 (130 aa).

Belongs to the universal ribosomal protein uS9 family.

This chain is Small ribosomal subunit protein uS9, found in Colwellia psychrerythraea (strain 34H / ATCC BAA-681) (Vibrio psychroerythus).